A 387-amino-acid chain; its full sequence is Eukaryotic translation initiation factor 3 subunit M (387 aa).

The PCI domain maps to 181–340; the sequence is RSSKVMIELL…RKVHISSTMH (160 aa).

Belongs to the eIF-3 subunit M family. Component of the eukaryotic translation initiation factor 3 (eIF-3) complex. The eIF-3 complex interacts with pix.

The protein resides in the cytoplasm. It localises to the golgi apparatus. In terms of biological role, component of the eukaryotic translation initiation factor 3 (eIF-3) complex, which is involved in protein synthesis of a specialized repertoire of mRNAs and, together with other initiation factors, stimulates binding of mRNA and methionyl-tRNAi to the 40S ribosome. The eIF-3 complex specifically targets and initiates translation of a subset of mRNAs involved in cell proliferation. In Drosophila willistoni (Fruit fly), this protein is Eukaryotic translation initiation factor 3 subunit M.